The sequence spans 79 residues: Conotoxin ArMSGL-0122 (79 aa).

The signal sequence occupies residues 1–20; that stretch reads MSRLGIMVLTLLLLVFIVTS. The propeptide occupies 21-44; the sequence is HQDAGEKQATQRAAINFRWKRSLT. Cystine bridges form between C52/C64, C56/C73, and C63/C77. L78 carries the post-translational modification Leucine amide.

The protein belongs to the conotoxin O3 superfamily. In terms of tissue distribution, expressed by the venom duct.

It is found in the secreted. In Conus arenatus (Sand-dusted cone), this protein is Conotoxin ArMSGL-0122.